Reading from the N-terminus, the 333-residue chain is Tetraacyldisaccharide 4'-kinase (333 aa).

55–62 (TIGGNGKT) serves as a coordination point for ATP.

The protein belongs to the LpxK family.

It carries out the reaction a lipid A disaccharide + ATP = a lipid IVA + ADP + H(+). It participates in glycolipid biosynthesis; lipid IV(A) biosynthesis; lipid IV(A) from (3R)-3-hydroxytetradecanoyl-[acyl-carrier-protein] and UDP-N-acetyl-alpha-D-glucosamine: step 6/6. Functionally, transfers the gamma-phosphate of ATP to the 4'-position of a tetraacyldisaccharide 1-phosphate intermediate (termed DS-1-P) to form tetraacyldisaccharide 1,4'-bis-phosphate (lipid IVA). The chain is Tetraacyldisaccharide 4'-kinase from Blochmanniella floridana.